A 374-amino-acid chain; its full sequence is bZIP transcription factor TRAB1 (374 aa).

Basic and acidic residues predominate over residues 1-13; it reads MDLKDGGGSERRG. Disordered stretches follow at residues 1–23 and 117–142; these read MDLK…AGAA and ASPG…QPTL. Positions 14–23 are enriched in low complexity; sequence AAAGAGAGAA. Residues 286 to 349 enclose the bZIP domain; that stretch reads VERRQRRMIK…KNFFPEMQKN (64 aa). A basic motif region spans residues 288–307; that stretch reads RRQRRMIKNRESAARSRARK. A leucine-zipper region spans residues 314–335; it reads LEAEVQKLKEQNMELQKKQEEI.

The protein belongs to the bZIP family. In terms of assembly, interacts with VP1 (via N-terminus). In terms of tissue distribution, expressed in roots, leaves and embryos.

Its subcellular location is the nucleus. In terms of biological role, transcription activator that mediates abscisic acid (ABA) signaling. Binds specifically to the ABA-responsive element (ABRE) of the EMP1 and RAB16A gene promoters. The protein is bZIP transcription factor TRAB1 of Oryza sativa subsp. japonica (Rice).